The primary structure comprises 258 residues: IGYKNARNKLDLETLTDILQHQIRAIPFENLNIHCGETMELGLKAIFEQVVWRNRGGWCLQVNHLLYWVLTTIGYETTMLGGYVYSTAANKYSNAMIHLLLKVTTEGKNYIVDAGFGRSYQMWQPLELISGKDQLQVPCIFRLTEERGIWYLDQIRRQQYIANEEFLNSDLLEKNKYRKIYSFTLEPRTIEDFESVNTYLQTSPTSVFTSKSFCSLQTSEGVHCLVGCTLTYRKFNYKDNMDLVEFKVLNEEEVEQKL.

C59 serves as the catalytic Acyl-thioester intermediate. Residue 97 to 98 (IH) coordinates substrate. Active-site residues include H98 and D113. CoA is bound by residues Y199 and T205.

Belongs to the arylamine N-acetyltransferase family.

It is found in the cytoplasm. The enzyme catalyses an arylamine + acetyl-CoA = an N-acetylarylamine + CoA. Participates in the detoxification of a plethora of hydrazine and arylamine drugs. The sequence is that of Arylamine N-acetyltransferase 1 (NAT1) from Felis catus (Cat).